The chain runs to 120 residues: Glycine cleavage system H protein (120 aa).

A Lipoyl-binding domain is found at 17-99 (IATVGITSHA…QGAGWFFKLK (83 aa)). Lysine 58 is subject to N6-lipoyllysine.

It belongs to the GcvH family. The glycine cleavage system is composed of four proteins: P, T, L and H. The cofactor is (R)-lipoate.

The glycine cleavage system catalyzes the degradation of glycine. The H protein shuttles the methylamine group of glycine from the P protein to the T protein. The polypeptide is Glycine cleavage system H protein (Agrobacterium fabrum (strain C58 / ATCC 33970) (Agrobacterium tumefaciens (strain C58))).